We begin with the raw amino-acid sequence, 204 residues long: Ribonuclease HII (204 aa).

The region spanning Val14–Leu203 is the RNase H type-2 domain. Residues Asp20, Glu21, and Asp112 each coordinate a divalent metal cation.

This sequence belongs to the RNase HII family. Requires Mn(2+) as cofactor. The cofactor is Mg(2+).

It is found in the cytoplasm. The catalysed reaction is Endonucleolytic cleavage to 5'-phosphomonoester.. Endonuclease that specifically degrades the RNA of RNA-DNA hybrids. The polypeptide is Ribonuclease HII (Thiobacillus denitrificans (strain ATCC 25259 / T1)).